The sequence spans 328 residues: Cytochrome c biogenesis protein CcsA (328 aa).

The next 8 membrane-spanning stretches (helical) occupy residues 13–33, 46–66, 73–93, 101–121, 146–166, 234–254, 263–283, and 295–315; these read ISFSVVSIVLTIYFFTLLVNL, GIVITFFGITGLLFTRWIYSG, LYESLIFLSWAFSIIHMVSYF, LNAITAPSAIFIQGFATSGLL, MILGYGALLCGSLLSIALLVI, IISLGFIFLTVGILSGAVWAN, WDPKETWAFITWTIFAIYLHI, and AIVASIGFLLIWICYFGVNLL.

The protein belongs to the CcmF/CycK/Ccl1/NrfE/CcsA family. May interact with Ccs1.

Its subcellular location is the plastid. It localises to the chloroplast thylakoid membrane. Functionally, required during biogenesis of c-type cytochromes (cytochrome c6 and cytochrome f) at the step of heme attachment. The protein is Cytochrome c biogenesis protein CcsA of Barbarea verna (Land cress).